The primary structure comprises 458 residues: Argininosuccinate lyase (458 aa).

Belongs to the lyase 1 family. Argininosuccinate lyase subfamily.

Its subcellular location is the cytoplasm. It catalyses the reaction 2-(N(omega)-L-arginino)succinate = fumarate + L-arginine. Its pathway is amino-acid biosynthesis; L-arginine biosynthesis; L-arginine from L-ornithine and carbamoyl phosphate: step 3/3. In Lachnospira eligens (strain ATCC 27750 / DSM 3376 / VPI C15-48 / C15-B4) (Eubacterium eligens), this protein is Argininosuccinate lyase.